The chain runs to 473 residues: FAD-dependent urate hydroxylase (473 aa).

Belongs to the HpyO family. In terms of assembly, homodimer. Requires FAD as cofactor.

The enzyme catalyses urate + NADH + O2 + H(+) = 5-hydroxyisourate + NAD(+) + H2O. It catalyses the reaction urate + NADPH + O2 + H(+) = 5-hydroxyisourate + NADP(+) + H2O. It participates in purine metabolism; urate degradation. Its function is as follows. Catalyzes the hydroxylation of urate to 5-hydroxyisourate (HIU). Is likely to be involved in the urate degradation pathway to allantoin. Is slightly more efficient (about 2.6 times) with NADPH than NADH as the electron donor. The chain is FAD-dependent urate hydroxylase from Xanthomonas campestris pv. campestris (strain ATCC 33913 / DSM 3586 / NCPPB 528 / LMG 568 / P 25).